The chain runs to 1003 residues: Translation initiation factor IF-2 (1003 aa).

Residues 36–392 (SSTIEPPVVK…RQKRNEYESM (357 aa)) form a disordered region. Residues 62 to 151 (AAKPAAAKPA…PKPAAAAKPA (90 aa)) show a composition bias toward low complexity. 2 stretches are compositionally biased toward pro residues: residues 178–190 (DGMPRPMGKPAPK) and 213–230 (PRPGGGPRPGGGPRPGGG). Gly residues-rich tracts occupy residues 231–243 (PRPQGQGRPGGQR) and 255–271 (GNRGGQRQGAGAGGPRP). The segment covering 273–286 (GGPRPQGGSRPQGG) has biased composition (low complexity). The segment covering 329–372 (GKGGRGGQAGGGAGGGFNRGGGTGGGAGRGGRRGGTAGAFGRPG) has biased composition (gly residues). Positions 376–385 (RRGRKSKRQK) are enriched in basic residues. Residues 498–670 (KRPPVVTVMG…VCLTADAELD (173 aa)) enclose the tr-type G domain. The interval 507–514 (GHVDHGKT) is G1. 507-514 (GHVDHGKT) contributes to the GTP binding site. The interval 532–536 (GITQG) is G2. Residues 557-560 (DTPG) are G3. Residues 557–561 (DTPGH) and 611–614 (NKID) each bind GTP. Positions 611–614 (NKID) are G4. A G5 region spans residues 647-649 (SAK).

Belongs to the TRAFAC class translation factor GTPase superfamily. Classic translation factor GTPase family. IF-2 subfamily.

It is found in the cytoplasm. Its function is as follows. One of the essential components for the initiation of protein synthesis. Protects formylmethionyl-tRNA from spontaneous hydrolysis and promotes its binding to the 30S ribosomal subunits. Also involved in the hydrolysis of GTP during the formation of the 70S ribosomal complex. This Corynebacterium glutamicum (strain R) protein is Translation initiation factor IF-2.